The following is a 294-amino-acid chain: Glycine--tRNA ligase alpha subunit (294 aa).

Belongs to the class-II aminoacyl-tRNA synthetase family. In terms of assembly, tetramer of two alpha and two beta subunits.

The protein resides in the cytoplasm. It carries out the reaction tRNA(Gly) + glycine + ATP = glycyl-tRNA(Gly) + AMP + diphosphate. The polypeptide is Glycine--tRNA ligase alpha subunit (Sulfurovum sp. (strain NBC37-1)).